A 236-amino-acid chain; its full sequence is UPF0257 lipoprotein YnfC (236 aa).

Residues 1-16 form the signal peptide; the sequence is MKKPLLLTLLCMILAG. Cys-17 carries N-palmitoyl cysteine lipidation. A lipid anchor (S-diacylglycerol cysteine) is attached at Cys-17.

The protein belongs to the UPF0257 family.

Its subcellular location is the cell membrane. The sequence is that of UPF0257 lipoprotein YnfC from Salmonella typhi.